A 221-amino-acid polypeptide reads, in one-letter code: Putative 5'(3')-deoxyribonucleotidase R824 (221 aa).

Positions 16 and 18 each coordinate Mg(2+). Catalysis depends on Asp-18, which acts as the Nucleophile. Phosphate-binding residues include Asp-18, Ser-103, and Lys-138. Mg(2+) is bound at residue Asp-149.

Belongs to the 5'(3')-deoxyribonucleotidase family. The cofactor is Mg(2+).

In terms of biological role, dephosphorylates the 5' and 2'(3')-phosphates of deoxyribonucleotides. This Acanthamoeba polyphaga mimivirus (APMV) protein is Putative 5'(3')-deoxyribonucleotidase R824.